Reading from the N-terminus, the 122-residue chain is Cytochrome b-c1 complex subunit 7-2, mitochondrial (122 aa).

Belongs to the UQCRB/QCR7 family. In terms of assembly, component of the ubiquinol-cytochrome c oxidoreductase (cytochrome b-c1 complex, complex III, CIII), a multisubunit enzyme composed of 10 subunits. The complex is composed of 3 respiratory subunits cytochrome b (MT-CYB), cytochrome c1 (CYC1-1 or CYC1-2) and Rieske protein (UCR1-1 or UCR1-2), 2 core protein subunits MPPalpha1 (or MPPalpha2) and MPPB, and 5 low-molecular weight protein subunits QCR7-1 (or QCR7-2), UCRQ-1 (or UCRQ-2), QCR9, UCRY and probably QCR6-1 (or QCR6-2). The complex exists as an obligatory dimer and forms supercomplexes (SCs) in the inner mitochondrial membrane with NADH-ubiquinone oxidoreductase (complex I, CI), resulting in different assemblies (supercomplexes SCI(1)III(2) and SCI(2)III(4)).

The protein resides in the mitochondrion inner membrane. Component of the ubiquinol-cytochrome c oxidoreductase, a multisubunit transmembrane complex that is part of the mitochondrial electron transport chain which drives oxidative phosphorylation. The respiratory chain contains 3 multisubunit complexes succinate dehydrogenase (complex II, CII), ubiquinol-cytochrome c oxidoreductase (cytochrome b-c1 complex, complex III, CIII) and cytochrome c oxidase (complex IV, CIV), that cooperate to transfer electrons derived from NADH and succinate to molecular oxygen, creating an electrochemical gradient over the inner membrane that drives transmembrane transport and the ATP synthase. The cytochrome b-c1 complex catalyzes electron transfer from ubiquinol to cytochrome c, linking this redox reaction to translocation of protons across the mitochondrial inner membrane, with protons being carried across the membrane as hydrogens on the quinol. In the process called Q cycle, 2 protons are consumed from the matrix, 4 protons are released into the intermembrane space and 2 electrons are passed to cytochrome c. The chain is Cytochrome b-c1 complex subunit 7-2, mitochondrial (QCR7-2) from Arabidopsis thaliana (Mouse-ear cress).